A 1250-amino-acid chain; its full sequence is DNA topoisomerase 3-alpha (1250 aa).

The Toprim domain occupies 27–171 (KYLNVAEKND…NISVYRATFS (145 aa)). The Topo IA-type catalytic domain occupies 189–610 (DKRQSDAVDV…EQIAKYKQAY (422 aa)). The active-site O-(5'-phospho-DNA)-tyrosine intermediate is tyrosine 356. Positions 769–835 (RGGGGGPGPG…GTGGGGLGGG (67 aa)) are enriched in gly residues. 2 disordered regions span residues 769-899 (RGGG…GLDE) and 953-1035 (NGGT…TVLC). The span at 840 to 865 (PGGESKKSATKKPPNEPKPKKTKEPK) shows a compositional bias: basic and acidic residues. Residues 866-886 (AAPNKKTSSKSSGSIRSFFTS) are compositionally biased toward low complexity. A compositionally biased stretch (polar residues) spans 956–965 (TMPTESNGDQ). Basic and acidic residues-rich tracts occupy residues 966-994 (QLDK…RERA) and 1012-1021 (PRWDSVERDS). The segment covering 1022-1033 (TPPSSVPESETV) has biased composition (low complexity). Zn(2+) contacts are provided by cysteine 1035, cysteine 1038, cysteine 1061, and cysteine 1067. The GRF-type 1 zinc finger occupies 1035–1076 (CTGCQQPARQNTVRKNGPNLGRLYYKCPKPDECNFFQWADEP). The segment at 1069-1150 (FFQWADEPPS…TATPGDGEEV (82 aa)) is disordered. Residues 1079 to 1101 (SAKSKNSTGSAPQSTTSWGSNRV) are compositionally biased toward polar residues. The span at 1106-1134 (SIQQSNSQRGQSSMRSNSSSTVTITQTKT) shows a compositional bias: low complexity. Residues cysteine 1152, cysteine 1154, cysteine 1177, and cysteine 1184 each coordinate Zn(2+). Residues 1152–1193 (CNCGQLASQLTVRKDGPNQGRPFYACPTREKSCGFFKWGDED) form a GRF-type 2 zinc finger. The interval 1188-1231 (KWGDEDQNQGASSTSWGSANRNPPGRSQPTAITSDGPKTRRCGL) is disordered. Positions 1195 to 1220 (NQGASSTSWGSANRNPPGRSQPTAIT) are enriched in polar residues.

This sequence belongs to the type IA topoisomerase family.

It carries out the reaction ATP-independent breakage of single-stranded DNA, followed by passage and rejoining.. In terms of biological role, releases the supercoiling and torsional tension of DNA introduced during the DNA replication and transcription by transiently cleaving and rejoining one strand of the DNA duplex. Introduces a single-strand break via transesterification at a target site in duplex DNA. The scissile phosphodiester is attacked by the catalytic tyrosine of the enzyme, resulting in the formation of a DNA-(5'-phosphotyrosyl)-enzyme intermediate and the expulsion of a 3'-OH DNA strand. The free DNA strand than undergoes passage around the unbroken strand thus removing DNA supercoils. Finally, in the religation step, the DNA 3'-OH attacks the covalent intermediate to expel the active-site tyrosine and restore the DNA phosphodiester backbone. Weakly relaxes negative supercoils and displays a distinct preference for binding single-stranded DNA. The protein is DNA topoisomerase 3-alpha (Top3alpha) of Drosophila melanogaster (Fruit fly).